Reading from the N-terminus, the 376-residue chain is Queuine tRNA-ribosyltransferase (376 aa).

Asp-90 acts as the Proton acceptor in catalysis. Substrate is bound by residues 90 to 94 (DSGGF), Asp-144, Gln-193, and Gly-220. The segment at 251–257 (GVGTPED) is RNA binding. Asp-270 functions as the Nucleophile in the catalytic mechanism. An RNA binding; important for wobble base 34 recognition region spans residues 275 to 279 (TRNAR). Residues Cys-308, Cys-310, Cys-313, and His-339 each contribute to the Zn(2+) site.

This sequence belongs to the queuine tRNA-ribosyltransferase family. Homodimer. Within each dimer, one monomer is responsible for RNA recognition and catalysis, while the other monomer binds to the replacement base PreQ1. Zn(2+) serves as cofactor.

It carries out the reaction 7-aminomethyl-7-carbaguanine + guanosine(34) in tRNA = 7-aminomethyl-7-carbaguanosine(34) in tRNA + guanine. The protein operates within tRNA modification; tRNA-queuosine biosynthesis. In terms of biological role, catalyzes the base-exchange of a guanine (G) residue with the queuine precursor 7-aminomethyl-7-deazaguanine (PreQ1) at position 34 (anticodon wobble position) in tRNAs with GU(N) anticodons (tRNA-Asp, -Asn, -His and -Tyr). Catalysis occurs through a double-displacement mechanism. The nucleophile active site attacks the C1' of nucleotide 34 to detach the guanine base from the RNA, forming a covalent enzyme-RNA intermediate. The proton acceptor active site deprotonates the incoming PreQ1, allowing a nucleophilic attack on the C1' of the ribose to form the product. After dissociation, two additional enzymatic reactions on the tRNA convert PreQ1 to queuine (Q), resulting in the hypermodified nucleoside queuosine (7-(((4,5-cis-dihydroxy-2-cyclopenten-1-yl)amino)methyl)-7-deazaguanosine). This Cupriavidus necator (strain ATCC 17699 / DSM 428 / KCTC 22496 / NCIMB 10442 / H16 / Stanier 337) (Ralstonia eutropha) protein is Queuine tRNA-ribosyltransferase.